Consider the following 523-residue polypeptide: UDP-glucuronosyltransferase 3A1 (523 aa).

The N-terminal stretch at M1 to A22 is a signal peptide. The Extracellular portion of the chain corresponds to A23 to Q483. N52 is a glycosylation site (N-linked (GlcNAc...) asparagine). The helical transmembrane segment at Y484–G504 threads the bilayer. At K505–A523 the chain is on the cytoplasmic side.

This sequence belongs to the UDP-glycosyltransferase family.

It localises to the membrane. The enzyme catalyses glucuronate acceptor + UDP-alpha-D-glucuronate = acceptor beta-D-glucuronoside + UDP + H(+). Functionally, UDP-glucuronosyltransferases catalyze phase II biotransformation reactions in which lipophilic substrates are conjugated with glucuronic acid to increase water solubility and enhance excretion. They are of major importance in the conjugation and subsequent elimination of potentially toxic xenobiotics and endogenous compounds. This chain is UDP-glucuronosyltransferase 3A1 (UGT3A1), found in Bos taurus (Bovine).